The following is a 59-amino-acid chain: UPF0509 protein KPK_3153 (59 aa).

The protein belongs to the UPF0509 family.

This Klebsiella pneumoniae (strain 342) protein is UPF0509 protein KPK_3153.